We begin with the raw amino-acid sequence, 89 residues long: Large ribosomal subunit protein bL27 (89 aa).

Belongs to the bacterial ribosomal protein bL27 family.

The protein is Large ribosomal subunit protein bL27 of Cytophaga hutchinsonii (strain ATCC 33406 / DSM 1761 / CIP 103989 / NBRC 15051 / NCIMB 9469 / D465).